The primary structure comprises 202 residues: 3-isopropylmalate dehydratase small subunit (202 aa).

This sequence belongs to the LeuD family. LeuD type 1 subfamily. Heterodimer of LeuC and LeuD.

It carries out the reaction (2R,3S)-3-isopropylmalate = (2S)-2-isopropylmalate. It functions in the pathway amino-acid biosynthesis; L-leucine biosynthesis; L-leucine from 3-methyl-2-oxobutanoate: step 2/4. In terms of biological role, catalyzes the isomerization between 2-isopropylmalate and 3-isopropylmalate, via the formation of 2-isopropylmaleate. The polypeptide is 3-isopropylmalate dehydratase small subunit (Rhizobium etli (strain ATCC 51251 / DSM 11541 / JCM 21823 / NBRC 15573 / CFN 42)).